We begin with the raw amino-acid sequence, 152 residues long: Flagellar assembly factor FliW (152 aa).

Belongs to the FliW family. In terms of assembly, interacts with translational regulator CsrA and flagellin(s).

It localises to the cytoplasm. Functionally, acts as an anti-CsrA protein, binds CsrA and prevents it from repressing translation of its target genes, one of which is flagellin. Binds to flagellin and participates in the assembly of the flagellum. The polypeptide is Flagellar assembly factor FliW (Caldicellulosiruptor bescii (strain ATCC BAA-1888 / DSM 6725 / KCTC 15123 / Z-1320) (Anaerocellum thermophilum)).